The chain runs to 295 residues: Small ribosomal subunit protein uS2 (295 aa).

Ser2 bears the N-acetylserine mark. At Ser43 the chain carries Phosphoserine. Lys52 carries the N6-acetyllysine modification. The interval 54 to 113 (TWEKLLLAARAIVAIENPADVSVISSRNTGQRAVLKFAAATGATPIAGRFTPGTFTNQIQ) is interaction with PPP1R16B. At Lys89 the chain carries N6-acetyllysine; alternate. Lys89 participates in a covalent cross-link: Glycyl lysine isopeptide (Lys-Gly) (interchain with G-Cter in SUMO2); alternate. Thr97 is subject to Phosphothreonine. Laminin-binding regions lie at residues 161–180 (IPCN…MLAR) and 205–229 (RDPE…EFQG). [DE]-W-[ST] repeat units lie at residues 230-232 (EWT), 247-249 (DWS), 266-268 (DWS), 275-277 (DWS), and 293-295 (EWS). Residues 242–295 (QPEVADWSEGVQVPSVPIQQFPTEDWSAQPATEDWSAAPTAQATEWVGTTTEWS) form a laminin-binding region. Residues 266–295 (DWSAQPATEDWSAAPTAQATEWVGTTTEWS) form a disordered region. Residues 280–295 (PTAQATEWVGTTTEWS) show a composition bias toward polar residues.

It belongs to the universal ribosomal protein uS2 family. As to quaternary structure, monomer (37LRP) and homodimer (67LR). Component of the small ribosomal subunit. Mature ribosomes consist of a small (40S) and a large (60S) subunit. The 40S subunit contains about 33 different proteins and 1 molecule of RNA (18S). The 60S subunit contains about 49 different proteins and 3 molecules of RNA (28S, 5.8S and 5S). Interacts with RPS21. Interacts with several laminins including at least LAMB1. Interacts with MDK. The mature dimeric form interacts with PPP1R16B (via its fourth ankyrin repeat). Interacts with PPP1CA only in the presence of PPP1R16B. Acylated. Acylation may be a prerequisite for conversion of the monomeric 37 kDa laminin receptor precursor (37LRP) to the mature dimeric 67 kDa laminin receptor (67LR), and may provide a mechanism for membrane association. In terms of processing, cleaved by stromelysin-3 (ST3) at the cell surface. Cleavage by stromelysin-3 may be a mechanism to alter cell-extracellular matrix interactions.

The protein localises to the cell membrane. It is found in the cytoplasm. The protein resides in the nucleus. Required for the assembly and/or stability of the 40S ribosomal subunit. Required for the processing of the 20S rRNA-precursor to mature 18S rRNA in a late step of the maturation of 40S ribosomal subunits. Also functions as a cell surface receptor for laminin. Plays a role in cell adhesion to the basement membrane and in the consequent activation of signaling transduction pathways. May play a role in cell fate determination and tissue morphogenesis. Also acts as a receptor for several other ligands, including the pathogenic prion protein, viruses, and bacteria. Acts as a PPP1R16B-dependent substrate of PPP1CA. The sequence is that of Small ribosomal subunit protein uS2 from Oryctolagus cuniculus (Rabbit).